The chain runs to 126 residues: Large ribosomal subunit protein bL12 (126 aa).

This sequence belongs to the bacterial ribosomal protein bL12 family. As to quaternary structure, homodimer. Part of the ribosomal stalk of the 50S ribosomal subunit. Forms a multimeric L10(L12)X complex, where L10 forms an elongated spine to which 2 to 4 L12 dimers bind in a sequential fashion. Binds GTP-bound translation factors.

Its function is as follows. Forms part of the ribosomal stalk which helps the ribosome interact with GTP-bound translation factors. Is thus essential for accurate translation. This is Large ribosomal subunit protein bL12 from Citrifermentans bemidjiense (strain ATCC BAA-1014 / DSM 16622 / JCM 12645 / Bem) (Geobacter bemidjiensis).